We begin with the raw amino-acid sequence, 551 residues long: Putative transport protein NTHI0043 (551 aa).

5 helical membrane passes run 4-24 (IAIT…IGHW), 28-48 (GVGL…HFTN), 65-85 (FGLI…FFSS), 95-115 (AFAI…HKIA), and 157-177 (VSYA…MWLI). 2 consecutive RCK C-terminal domains span residues 191 to 275 (RFNA…IIGY) and 277 to 360 (VDAP…VIGN). Helical transmembrane passes span 370–390 (MLPV…PFYI), 402–424 (AGGP…LYWF), 438–458 (IVLF…DTLV), 463–483 (LEWM…TGIL), 492–512 (YLTI…LAFA), and 529–549 (VYPL…VLLW).

Belongs to the AAE transporter (TC 2.A.81) family. YidE subfamily.

Its subcellular location is the cell membrane. The protein is Putative transport protein NTHI0043 of Haemophilus influenzae (strain 86-028NP).